Here is an 86-residue protein sequence, read N- to C-terminus: Small ribosomal subunit protein bS18c (86 aa).

This sequence belongs to the bacterial ribosomal protein bS18 family. Part of the 30S ribosomal subunit.

It is found in the plastid. The protein resides in the chloroplast. In Pseudotsuga menziesii (Douglas-fir), this protein is Small ribosomal subunit protein bS18c.